The primary structure comprises 149 residues: Calmodulin (149 aa).

The residue at position 2 (Ala-2) is an N-acetylalanine. EF-hand domains lie at 8–43 (EQIA…LGQN), 44–79 (PTEA…KMKD), 81–116 (DSEE…LGEK), and 117–149 (LTDE…MMAK). Residues Asp-21, Asp-23, Asp-25, Cys-27, Glu-32, Asp-57, Asp-59, Asn-61, Thr-63, Glu-68, Asp-94, Asp-96, Asn-98, and Glu-105 each coordinate Ca(2+). Lys-116 carries the post-translational modification N6,N6,N6-trimethyllysine. Residues Asp-130, Asp-132, Asp-134, Gln-136, and Glu-141 each coordinate Ca(2+).

It belongs to the calmodulin family. In terms of processing, the N-terminus is blocked.

Its function is as follows. Calmodulin mediates the control of a large number of enzymes, ion channels and other proteins by Ca(2+). Among the enzymes to be stimulated by the calmodulin-Ca(2+) complex are a number of protein kinases and phosphatases. This Spinacia oleracea (Spinach) protein is Calmodulin.